Consider the following 213-residue polypeptide: tRNA (guanine-N(7)-)-methyltransferase (213 aa).

The S-adenosyl-L-methionine site is built by Asp-44, Glu-69, Asn-96, and Asp-119. Residue Asp-119 is part of the active site. The substrate site is built by Lys-123 and Asp-155.

The protein belongs to the class I-like SAM-binding methyltransferase superfamily. TrmB family.

The catalysed reaction is guanosine(46) in tRNA + S-adenosyl-L-methionine = N(7)-methylguanosine(46) in tRNA + S-adenosyl-L-homocysteine. The protein operates within tRNA modification; N(7)-methylguanine-tRNA biosynthesis. Catalyzes the formation of N(7)-methylguanine at position 46 (m7G46) in tRNA. The protein is tRNA (guanine-N(7)-)-methyltransferase of Thermosynechococcus vestitus (strain NIES-2133 / IAM M-273 / BP-1).